Reading from the N-terminus, the 608-residue chain is MSAVAGTADSLQNRFRSHFCGRLHTEFENKTIAVAGWVHRIRDHGGLIFIDLRDHTGICQLIIQPEKEELFRKAEALHTESVICVSGVVVRRSEETVNPRLASGEIEVVVEDIRVESNASPLPFPVADELQTSEELRLKYRFLDLRREKIHENIHFRSRLISEVRRYLEERSFMEIQTPILTSSSPEGARDFLVPSRLHPGKFYALPQAPQQFKQLLMVSGFSRYFQIAPCFRDEDARADRSPGEFYQIDMEMAFIEQDDLFEILEGMFKHLTEKMSNKRITQFPFPRISYKEVMNRYGSDKPDLRIPVEIEDVTELFVNSSFKVFAGNTKEGNCIKAMVLKGRGNESRQFYDKAERRAKELGSAGLAYIQYKEEGPKGPIVKFFSEDEMNDLKERLQIEAGDVVFFGAGKWERTCKIMGGMREYFSDLFELDRDELSFCWVVDFPMYEYDEAAKKIEFSHNPFSMPQGEMEALETMDPLDILAYQYDIVCNGIELSSGAIRNHRPDIMYRAFGIAGYEKAEVDKRFGHMIEAFNMGAPPHGGIAPGLDRLVMILRDEQNIREVIAFPMNQQAEDLMMAAPAEVSPLQLRELSLKLDLPKEEKKEKRS.

Glu-187 serves as a coordination point for L-aspartate. The interval 211–214 (QQFK) is aspartate. L-aspartate is bound by residues Arg-233 and His-461. 233 to 235 (RDE) is an ATP binding site. Glu-495 serves as a coordination point for ATP. L-aspartate is bound at residue Arg-502. Position 547 to 550 (547 to 550 (GLDR)) interacts with ATP.

This sequence belongs to the class-II aminoacyl-tRNA synthetase family. Type 1 subfamily. Homodimer.

It localises to the cytoplasm. The catalysed reaction is tRNA(Asx) + L-aspartate + ATP = L-aspartyl-tRNA(Asx) + AMP + diphosphate. In terms of biological role, aspartyl-tRNA synthetase with relaxed tRNA specificity since it is able to aspartylate not only its cognate tRNA(Asp) but also tRNA(Asn). Reaction proceeds in two steps: L-aspartate is first activated by ATP to form Asp-AMP and then transferred to the acceptor end of tRNA(Asp/Asn). This chain is Aspartate--tRNA(Asp/Asn) ligase, found in Chlorobium phaeobacteroides (strain BS1).